Here is a 239-residue protein sequence, read N- to C-terminus: Purine nucleoside phosphorylase DeoD-type (239 aa).

His-5 serves as a coordination point for a purine D-ribonucleoside. Phosphate is bound by residues Gly-21, Arg-25, Arg-44, and 88 to 91; that span reads RVGS. Residues 180 to 182 and 204 to 205 contribute to the a purine D-ribonucleoside site; these read EME and SD. Asp-205 serves as the catalytic Proton donor.

Belongs to the PNP/UDP phosphorylase family. In terms of assembly, homohexamer; trimer of homodimers.

The catalysed reaction is a purine D-ribonucleoside + phosphate = a purine nucleobase + alpha-D-ribose 1-phosphate. It catalyses the reaction a purine 2'-deoxy-D-ribonucleoside + phosphate = a purine nucleobase + 2-deoxy-alpha-D-ribose 1-phosphate. Catalyzes the reversible phosphorolytic breakdown of the N-glycosidic bond in the beta-(deoxy)ribonucleoside molecules, with the formation of the corresponding free purine bases and pentose-1-phosphate. The sequence is that of Purine nucleoside phosphorylase DeoD-type from Yersinia pseudotuberculosis serotype O:1b (strain IP 31758).